Reading from the N-terminus, the 268-residue chain is Aliphatic sulfonates import ATP-binding protein SsuB 3 (268 aa).

Positions M1–G27 are disordered. Residues P13–T26 show a composition bias toward basic and acidic residues. Residues V32–Y247 enclose the ABC transporter domain. Position 64–71 (G64–T71) interacts with ATP.

The protein belongs to the ABC transporter superfamily. Aliphatic sulfonates importer (TC 3.A.1.17.2) family. In terms of assembly, the complex is composed of two ATP-binding proteins (SsuB), two transmembrane proteins (SsuC) and a solute-binding protein (SsuA).

It is found in the cell membrane. The catalysed reaction is ATP + H2O + aliphatic sulfonate-[sulfonate-binding protein]Side 1 = ADP + phosphate + aliphatic sulfonateSide 2 + [sulfonate-binding protein]Side 1.. In terms of biological role, part of the ABC transporter complex SsuABC involved in aliphatic sulfonates import. Responsible for energy coupling to the transport system. The polypeptide is Aliphatic sulfonates import ATP-binding protein SsuB 3 (Rhodococcus jostii (strain RHA1)).